Reading from the N-terminus, the 347-residue chain is NADH-ubiquinone oxidoreductase chain 2 (347 aa).

10 helical membrane-spanning segments follow: residues 3–23 (PLIFIIIMFTLILGTVITMIS), 26–46 (WLLIWMGLEMNMFSMIPIIMM), 67–87 (SMLLMMGVIINLYYSGQWTIM), 96–116 (YMMTIALAMKLGLAPFHFWVP), 149–169 (LNLNLMLTLAILSILIGGWGG), 178–198 (IMAYSSIAHMGWMTAIIMYNT), 200–220 (LMMLNLVIYLMMTITMFALFI), 239–259 (ILTTMLLTTLLSLGGLPPLSG), 274–294 (NMLLLPTTMAIMALLNLYFYM), and 325–345 (LSPTLITLSTMLIPLTPMMLI).

It belongs to the complex I subunit 2 family. Core subunit of respiratory chain NADH dehydrogenase (Complex I) which is composed of 45 different subunits. Interacts with TMEM242.

It localises to the mitochondrion inner membrane. It catalyses the reaction a ubiquinone + NADH + 5 H(+)(in) = a ubiquinol + NAD(+) + 4 H(+)(out). Its function is as follows. Core subunit of the mitochondrial membrane respiratory chain NADH dehydrogenase (Complex I) which catalyzes electron transfer from NADH through the respiratory chain, using ubiquinone as an electron acceptor. Essential for the catalytic activity and assembly of complex I. This is NADH-ubiquinone oxidoreductase chain 2 from Dasypus novemcinctus (Nine-banded armadillo).